Here is a 277-residue protein sequence, read N- to C-terminus: Ribosome-inactivating protein luffin-alpha (277 aa).

Positions 1-19 are cleaved as a signal peptide; sequence MKRFTVLILAIFVAASTVE. Glu179 is an active-site residue.

This sequence belongs to the ribosome-inactivating protein family. Type 1 RIP subfamily.

The enzyme catalyses Endohydrolysis of the N-glycosidic bond at one specific adenosine on the 28S rRNA.. The chain is Ribosome-inactivating protein luffin-alpha from Luffa aegyptiaca (Sponge gourd).